Here is a 92-residue protein sequence, read N- to C-terminus: Small ribosomal subunit protein bS20 (92 aa).

The segment at 1–20 is disordered; sequence MANIASAKKRARQAENNRAH.

Belongs to the bacterial ribosomal protein bS20 family.

Its function is as follows. Binds directly to 16S ribosomal RNA. In Methylococcus capsulatus (strain ATCC 33009 / NCIMB 11132 / Bath), this protein is Small ribosomal subunit protein bS20.